The following is a 322-amino-acid chain: Cytochrome f (322 aa).

Residues 1 to 35 (MQTRNTFSWTWIREEITRSISVSLMIYIITWSSIS) form the signal peptide. Positions 38, 58, 61, and 62 each coordinate heme. A helical membrane pass occupies residues 288-308 (VQGLLFFLGSVVLAQIFLVLK).

The protein belongs to the cytochrome f family. The 4 large subunits of the cytochrome b6-f complex are cytochrome b6, subunit IV (17 kDa polypeptide, petD), cytochrome f and the Rieske protein, while the 4 small subunits are PetG, PetL, PetM and PetN. The complex functions as a dimer. It depends on heme as a cofactor.

The protein resides in the plastid. It is found in the chloroplast thylakoid membrane. Functionally, component of the cytochrome b6-f complex, which mediates electron transfer between photosystem II (PSII) and photosystem I (PSI), cyclic electron flow around PSI, and state transitions. This chain is Cytochrome f, found in Aethionema cordifolium (Lebanon stonecress).